Consider the following 609-residue polypeptide: Indole-3-acetic acid-amido synthetase GH3.17 (609 aa).

This sequence belongs to the IAA-amido conjugating enzyme family.

In terms of biological role, catalyzes the synthesis of indole-3-acetic acid (IAA)-amino acid conjugates, providing a mechanism for the plant to cope with the presence of excess auxin. Strongly reactive with Glu, Gln, Trp, Asp, Ala, Leu, Phe, Gly, Tyr, Met, Ile and Val. Appears to favor Glu over Asp while the other GH3 favor Asp over Glu. Little or no product formation with His, Ser, Thr, Arg, Lys, or Cys. Also active on pyruvic and butyric acid analogs of IAA, PAA and the synthetic auxin naphthaleneacetic acid (NAA). The two chlorinated synthetic auxin herbicides 2,4-D and 3,6-dichloro-o-anisic acid (dicamba) cannot be used as substrates. This is Indole-3-acetic acid-amido synthetase GH3.17 (GH3.17) from Arabidopsis thaliana (Mouse-ear cress).